A 1134-amino-acid chain; its full sequence is MSNRDSANPPGFNDAVPLAICYIDSSTSSHDEYLTLLQSKVSAPDKNFRDETVDGAPFLAGDAISKGHRYSPPVRSDRASAQGLLQQHLEKSSTLENLKRYSSTLLGRQNDAVIDEPFAPFRPPPRVTLSESRRDRWLQGLSDPMVPLSSLIKTIPHGLWGEDILRMLVKFRVPFTRAIWFIRCAGVNEARSFLRKVQTTDITEWVKNWTDVAAGFLISFISSFLNADIYSFADDYTYLLKLFGRLLAEELVSPKHFLLRIVSFSGDSSLKSFSLHFFALQFFSTSLIQYTHICRKCVITILQSYQQLIVDQPANLLKFSLLSKKVSHFLFTLAQKNIESFFFPTEWDKLKPTIILLWKDFPNYSTLLSIMQERNSKAMYMYKPVTSSIRFLQIISCLSFPVGWRTLAKDLFKLLPVYTGVPLLLHWCINCRSIFSGDRNFIVSSIFDNANFDRNLIVDLTLSFVLKLHPLEYNECVAAAQLLDHLAACGYFFFSKYIARLASLGYLRESMLNSSFMDDQRKILVQLPILRMSQQLKNKIYYILSKGNYFVDWSICDEYVKRFKEDHFSFMFKKEENYAIITLSLVKIASTPMSKLYEDYLVMLFAFHYSMFQVMTKLIADNLVHFSFQSCACQTLFFICSVVPKTESQKLLLNEMGKLFQVELNFSYDSPDVNLLIEQFYEITSYESNYDDAFVEYKDATVANRKDFIEFLFHNITVSSKHTAVIFTSDLLMVLKIALNHPPYFDDLATTTFSSLLKRDECTILSFFKILQFYGCKLLSVDQIWAVVSDVYEAQDNNTTLKQFFNYLLDESTWPEGYLEERHWRSILCKEARKHDSGLKLFKLGIKLCTRNEQIMKTIWSFIHVHDCNVISEVIPDQRFLRTLTEHFMIDLRQLDIVTCLKKALVTLDEFSAPLYATWLTTLDDDELSELTDDVVQKKVLESLDNYKSGIWKLVLSGLPNCKTVFEHLLLFSLEERLDLPAAFLQDLIGASAYVMEQVPDSWFLEKLPCPLTQSLQSFSHLSNHIEVLDSTRQSRLTFLCHLILHMHGFVELTDQLATLESLTIRKCIYRNQELLDLLLFSIHLVKPNVETNDEVCNTLKAWENIESRPYTIDFPEALQQYSPRIVLYEPTFW.

This sequence belongs to the Mediator complex subunit 12 family. As to quaternary structure, component of the srb8-11 complex which consists of rb8, srb9(TRAP240), srb10 and srb11. The srb8-11 complex associates with the Mediator complex thereby blocking association with RNA polymerase II and leading to reduced transcriptional activation by Mediator.

The protein localises to the nucleus. In terms of biological role, component of the srb8-11 complex. The srb8-11 complex is a regulatory module of the Mediator complex which is itself involved in regulation of basal and activated RNA polymerase II-dependent transcription. The srb8-11 complex may be involved in the transcriptional repression of a subset of genes regulated by Mediator. It may inhibit the association of the Mediator complex with RNA polymerase II to form the holoenzyme complex. This is Mediator of RNA polymerase II transcription subunit 12 (srb8) from Schizosaccharomyces pombe (strain 972 / ATCC 24843) (Fission yeast).